Here is a 347-residue protein sequence, read N- to C-terminus: NADH-ubiquinone oxidoreductase chain 2 (347 aa).

11 helical membrane passes run 1–21 (MNPA…MIVT), 25–45 (HWLT…PILM), 59–79 (YFLT…INLV), 96–116 (ITMT…FWVP), 127–147 (GLIL…QISP), 149–169 (INLE…GWGG), 178–198 (IMAY…AYNP), 201–221 (TLLN…MLML), 240–260 (LATT…LSGF), 274–294 (DSII…YFYM), and 326–346 (ISPL…LTLL).

The protein belongs to the complex I subunit 2 family. Core subunit of respiratory chain NADH dehydrogenase (Complex I) which is composed of 45 different subunits. Interacts with TMEM242.

It is found in the mitochondrion inner membrane. It catalyses the reaction a ubiquinone + NADH + 5 H(+)(in) = a ubiquinol + NAD(+) + 4 H(+)(out). Functionally, core subunit of the mitochondrial membrane respiratory chain NADH dehydrogenase (Complex I) which catalyzes electron transfer from NADH through the respiratory chain, using ubiquinone as an electron acceptor. Essential for the catalytic activity and assembly of complex I. In Dobsonia minor (Lesser bare-backed fruit bat), this protein is NADH-ubiquinone oxidoreductase chain 2.